Consider the following 558-residue polypeptide: MPLARLPGWLCVVACGLLLLLQHVHGQDSASPIRNTHRGQVRGSFVHVKDTKSGVHAFLGIPFAKPPVGLLRFAPPEDPEPWSGVRDGTSQPAMCLQPDIMNLEDAKEMNLILPPISMSEDCLYLNIYTPTHAQEGSNLPVMVWIHGGGLVVGSASMNDVSKLAATEEIVIVAIQYRLGVLGFFSTGDQHARGNWGYLDQVAALRWVQKNIAYFGGNRDRVTIFGVSAGGTSVSSHILSPMSKGLFHGAIMQSGVALLPDLISDTSEVVYKTVANLSGCEATDSEALIHCLRAKSKQEILAINQVFKMIPAVVDGEFLPKHPQELLTSMDFHPVPSIIGVNTDECGWGVPMFMGLDHIIKNITRETLPAVLKNTAARMMLPPECSHLLVEEYMGDTEDPETLQAQFREMLGDFMFVIPALQVAHFQRSQAPVYFYEFQHLSSFIKHVRPSHVKADHGDDVAFVFGSYLWDMNLDLTEEEELLKRMMMKYWANFARNGNPNSEGLPSWPVLDHDEQYLQLDTQPAVGRALKARRLQFWTKTLPQKIQELKGSQDKHAEL.

Positions methionine 1–glycine 26 are cleaved as a signal peptide. A disulfide bridge connects residues cysteine 95 and cysteine 122. Lysine 209 carries the post-translational modification N6-succinyllysine. Serine 227 (acyl-ester intermediate) is an active-site residue. Asparagine 275 carries an N-linked (GlcNAc...) asparagine glycan. Cysteine 279 and cysteine 290 are disulfide-bonded. Lysine 296 carries the post-translational modification N6-succinyllysine. Glutamate 344 (charge relay system) is an active-site residue. N-linked (GlcNAc...) asparagine glycosylation occurs at asparagine 361. Histidine 456 functions as the Charge relay system in the catalytic mechanism.

It belongs to the type-B carboxylesterase/lipase family.

It is found in the microsome. It carries out the reaction (-)-trans-permethrin + H2O = (3-phenoxyphenyl)methanol + (1S,3R)-3-(2,2-dichlorovinyl)-2,2-dimethylcyclopropanecarboxylate + H(+). The enzyme catalyses all-trans-retinyl hexadecanoate + H2O = all-trans-retinol + hexadecanoate + H(+). In terms of biological role, carboxylesterases that catalyzes the hydrolysis of pyrethroids pesticides. Hydrolyzes permethrin faster than cypermethrin. Hydrolyzes retinyl esters. This Mus musculus (Mouse) protein is Pyrethroid hydrolase Ces2a.